An 879-amino-acid chain; its full sequence is Probable phospholipid transport protein YdbH (879 aa).

At 1–6 (MLGKYK) the chain is on the cytoplasmic side. A helical membrane pass occupies residues 7–29 (AVLALLLLIILVPLTLLMTLGLW). The Periplasmic portion of the chain corresponds to 30 to 879 (VPTLAGIWLP…PQGKECEEKQ (850 aa)).

In terms of assembly, interacts with the outer membrane lipoprotein YnbE.

The protein localises to the cell inner membrane. Functionally, involved in outer membrane lipid homeostasis. Interacts with the outer membrane lipoprotein YnbE to form a functional protein bridge connecting the inner and outer membranes of the cell. Likely transports phospholipids between the inner membrane and the outer membrane. It would provide a bridge-like structure that protects phospholipids as they travel across the periplasm. Its function is as follows. TamB, YdbH and YhdP are redundant, but not equivalent, in performing an essential function for growth and maintaining lipid homeostasis in the outer membrane. Any of these three proteins is sufficient for growth. The polypeptide is Probable phospholipid transport protein YdbH (ydbH) (Escherichia coli (strain K12)).